A 555-amino-acid polypeptide reads, in one-letter code: Acetyl-coenzyme A thioesterase (555 aa).

Residues 5 to 117 (APGEVVMSQA…FSTFVAKPVG (113 aa)) enclose the HotDog ACOT-type 1 domain. Lys-33 bears the N6-succinyllysine mark. Residues 53–55 (TAS), 82–84 (STS), and Arg-144 each bind CoA. Residues Lys-159 and Lys-228 each carry the N6-succinyllysine modification. Residues 179-294 (RGTSVQSIEL…FLIYNAADDK (116 aa)) enclose the HotDog ACOT-type 2 domain. CoA is bound at residue 234–236 (KFR). An START domain is found at 340–549 (CIHWDISKQA…IQFLENPPDD (210 aa)).

In terms of assembly, homodimer or homotetramer.

It localises to the cytoplasm. The protein localises to the cytosol. The catalysed reaction is acetyl-CoA + H2O = acetate + CoA + H(+). It carries out the reaction butanoyl-CoA + H2O = butanoate + CoA + H(+). The enzyme catalyses hexanoyl-CoA + H2O = hexanoate + CoA + H(+). The protein operates within lipid metabolism; fatty acid metabolism. Its activity is regulated as follows. Inhibited by ADP. Active in the presence of ATP. Cold labile, it dissociates into inactive monomers at low temperature. Its function is as follows. Catalyzes the hydrolysis of acyl-CoAs into free fatty acids and coenzyme A (CoASH), regulating their respective intracellular levels. Preferentially hydrolyzes acetyl-CoA. This Homo sapiens (Human) protein is Acetyl-coenzyme A thioesterase (ACOT12).